Here is a 669-residue protein sequence, read N- to C-terminus: Gametogenetin-binding protein 2 (669 aa).

2 disordered regions span residues 375-421 and 452-475; these read QEKK…GNPC and PHSN…SQEG. Residues 376-388 show a composition bias toward basic residues; it reads EKKRQKKNRKKNK. The segment covering 398-408 has biased composition (polar residues); sequence ETKSANPSQKN.

The protein localises to the cytoplasm. In terms of biological role, may be involved in spermatogenesis. The protein is Gametogenetin-binding protein 2 (ggnbp2) of Xenopus tropicalis (Western clawed frog).